The following is a 29-amino-acid chain: Cytochrome b6-f complex subunit 8 (29 aa).

Residues 3–23 (IVGIAWAALMVVFTFSLSLVV) form a helical membrane-spanning segment.

The protein belongs to the PetN family. As to quaternary structure, the 4 large subunits of the cytochrome b6-f complex are cytochrome b6, subunit IV (17 kDa polypeptide, PetD), cytochrome f and the Rieske protein, while the 4 small subunits are PetG, PetL, PetM and PetN. The complex functions as a dimer.

The protein resides in the plastid. It localises to the chloroplast thylakoid membrane. Its function is as follows. Component of the cytochrome b6-f complex, which mediates electron transfer between photosystem II (PSII) and photosystem I (PSI), cyclic electron flow around PSI, and state transitions. This Cryptomeria japonica (Japanese cedar) protein is Cytochrome b6-f complex subunit 8.